Reading from the N-terminus, the 350-residue chain is UDP-3-O-acylglucosamine N-acyltransferase (350 aa).

H251 acts as the Proton acceptor in catalysis.

The protein belongs to the transferase hexapeptide repeat family. LpxD subfamily. In terms of assembly, homotrimer.

It catalyses the reaction a UDP-3-O-[(3R)-3-hydroxyacyl]-alpha-D-glucosamine + a (3R)-hydroxyacyl-[ACP] = a UDP-2-N,3-O-bis[(3R)-3-hydroxyacyl]-alpha-D-glucosamine + holo-[ACP] + H(+). It participates in bacterial outer membrane biogenesis; LPS lipid A biosynthesis. Catalyzes the N-acylation of UDP-3-O-acylglucosamine using 3-hydroxyacyl-ACP as the acyl donor. Is involved in the biosynthesis of lipid A, a phosphorylated glycolipid that anchors the lipopolysaccharide to the outer membrane of the cell. This chain is UDP-3-O-acylglucosamine N-acyltransferase, found in Prochlorococcus marinus (strain NATL2A).